The chain runs to 424 residues: Histidine--tRNA ligase (424 aa).

This sequence belongs to the class-II aminoacyl-tRNA synthetase family. In terms of assembly, homodimer.

It is found in the cytoplasm. It carries out the reaction tRNA(His) + L-histidine + ATP = L-histidyl-tRNA(His) + AMP + diphosphate + H(+). The chain is Histidine--tRNA ligase from Salmonella dublin (strain CT_02021853).